Here is an 83-residue protein sequence, read N- to C-terminus: Large ribosomal subunit protein uL23 (83 aa).

This sequence belongs to the universal ribosomal protein uL23 family. In terms of assembly, part of the 50S ribosomal subunit. Contacts protein L29.

Binds to 23S rRNA. One of the proteins that surrounds the polypeptide exit tunnel on the outside of the ribosome. This is Large ribosomal subunit protein uL23 from Archaeoglobus fulgidus (strain ATCC 49558 / DSM 4304 / JCM 9628 / NBRC 100126 / VC-16).